The following is an 84-amino-acid chain: MFMADAYFADTVWYVGQIIFIVAICLLVIIVVVAFLATFKLCIQLCGMCNTLVLSPSIYVFNRGRQFYEFYNDVKPPVLDVDDV.

Residues 1–18 lie on the Virion surface side of the membrane; the sequence is MFMADAYFADTVWYVGQI. Residues 19–39 form a helical membrane-spanning segment; it reads IFIVAICLLVIIVVVAFLATF. Topologically, residues 40–80 are intravirion; that stretch reads KLCIQLCGMCNTLVLSPSIYVFNRGRQFYEFYNDVKPPVLD.

This sequence belongs to the betacoronaviruses E protein family. Homopentamer. Interacts with membrane protein M in the budding compartment of the host cell, which is located between endoplasmic reticulum and the Golgi complex. Interacts with Nucleoprotein.

The protein localises to the host Golgi apparatus membrane. Plays a central role in virus morphogenesis and assembly. Acts as a viroporin and self-assembles in host membranes forming pentameric protein-lipid pores that allow ion transport. Also plays a role in the induction of apoptosis. The chain is Envelope small membrane protein from Bovine coronavirus (strain 98TXSF-110-ENT) (BCoV-ENT).